The sequence spans 833 residues: MHQLFRLVLGQKDLSRAGDLFSLDDSEIEDSLTEALEQIKIISSSSDYQTNNNDQAVVEICITRITTAIRETESIEKHAKALVGLWDSCLEHNLRPFGKDEDTPHAKIASDIMSCILQNYNRPPVMALAIPIAVKFLHRGNKELCRNMSNYLSLAAITKADLLADHTEVIVKSILQGNTMLLRVLPAVYEKQPQPINRHLTELLALMSQLEQPEQYHLLRLLHVAAKKKQLEVVQKCIPFLIGHLKDSTHNDIILNILIEIAVYEPVALNSFLPMLKEIGERFPYLTGQMARIYGAVGHVDEERARSCLTYLVSQLANMEHSFHHILLLEIKSITDTFSSILGPQSRDIFRMSNSFTAIAKLLTRQLENTKAGSGRRKISTEIEFPEKLEETKLIVTENEDHEKLQVKIQAFEDKINAGSNTPGSIRRYSLGQVSKEERKNIRFNRSKSLAFHTMLTKGVGSDDGEDENRGDIPASISLSEIDPLGQGNDKLPFKTDTERSQLGESSVSYPNIIHIDSENLSETVKENSQEETPETTASPIEYQDKLYLHLKKNLSKVKAYAMEIGKKIPVPDQCTIEDTVRSCVAKLFFTCSLKGHYCLYSKSSFILISQEPQPWIQIMFLFQQSLFPEPLSIQSHSVQFLRALWEKTQAGGAHSFETAMMESTFPQQKDLDQVQLHLEEVRFFDVFGFSETAGAWQCFMCNNPEKATVVNQDGQPLIEGKLKEKQVRWKFIKRWKTRYFTLAGNQLLFQKGKSKDDPDDCPIELSKVQSVKAVAKKRRDRSLPRAFEIFTDNKTYVFKAKDEKNAEEWLQCINVAVAQAKERESREVTTYL.

The interaction with TGFBR1 stretch occupies residues 201–319 (TELLALMSQL…TYLVSQLANM (119 aa)). The segment at 458 to 505 (KGVGSDDGEDENRGDIPASISLSEIDPLGQGNDKLPFKTDTERSQLGE) is disordered. Basic and acidic residues predominate over residues 492–502 (LPFKTDTERSQ). Positions 663–833 (ESTFPQQKDL…RESREVTTYL (171 aa)) are interaction with TGFBR1. The 104-residue stretch at 716–819 (QPLIEGKLKE…WLQCINVAVA (104 aa)) folds into the PH domain.

It belongs to the MELT/VEPH family. As to quaternary structure, interacts with TGFBR1.

The protein resides in the cell membrane. In terms of biological role, interacts with TGF-beta receptor type-1 (TGFBR1) and inhibits dissociation of activated SMAD2 from TGFBR1, impeding its nuclear accumulation and resulting in impaired TGF-beta signaling. May also affect FOXO, Hippo and Wnt signaling. This is Ventricular zone-expressed PH domain-containing protein homolog 1 (VEPH1) from Homo sapiens (Human).